The primary structure comprises 149 residues: Large ribosomal subunit protein bL9 (149 aa).

This sequence belongs to the bacterial ribosomal protein bL9 family.

In terms of biological role, binds to the 23S rRNA. In Salmonella dublin (strain CT_02021853), this protein is Large ribosomal subunit protein bL9.